Here is a 430-residue protein sequence, read N- to C-terminus: D-galactonate transporter (430 aa).

The Cytoplasmic portion of the chain corresponds to M1 to T17. The chain crosses the membrane as a helical span at residues L18–S39. D-galactonate-binding residues include Y29 and R32. Residues A40–K50 lie on the Periplasmic side of the membrane. A helical transmembrane segment spans residues A51–F74. Y64 is a binding site for D-galactonate. The Cytoplasmic portion of the chain corresponds to L75 to R81. The chain crosses the membrane as a helical span at residues V82 to F100. The Periplasmic portion of the chain corresponds to A101–G103. A helical membrane pass occupies residues L104–N125. Residues N126–A141 are Cytoplasmic-facing. A helical transmembrane segment spans residues V142–Q164. Residues E165–S168 are Periplasmic-facing. The helical transmembrane segment at W169 to V190 threads the bilayer. Over Y191–K241 the chain is Cytoplasmic. The helical transmembrane segment at L242–L267 threads the bilayer. Residues T268–L276 lie on the Periplasmic side of the membrane. Residues K277–G297 traverse the membrane as a helical segment. Over W298–R314 the chain is Cytoplasmic. A helical membrane pass occupies residues K315–Y333. Topologically, residues T334 to D336 are periplasmic. A helical transmembrane segment spans residues P337–A354. Over S355–T373 the chain is Cytoplasmic. Residue W358 participates in D-galactonate binding. The helical transmembrane segment at G374–L395 threads the bilayer. At A396–G400 the chain is on the periplasmic side. Residues F401 to V423 form a helical membrane-spanning segment. Topologically, residues G424 to G430 are cytoplasmic.

This sequence belongs to the major facilitator superfamily. Phthalate permease family.

The protein resides in the cell inner membrane. It catalyses the reaction D-galactonate(in) + H(+)(in) = D-galactonate(out) + H(+)(out). In terms of biological role, involved in D-galactonate metabolism. Catalyzes the proton-dependent uptake of galactonate into the cell. The protein is D-galactonate transporter (dgoT) of Escherichia coli O6:H1 (strain CFT073 / ATCC 700928 / UPEC).